Reading from the N-terminus, the 141-residue chain is Large ribosomal subunit protein uL11 (141 aa).

This sequence belongs to the universal ribosomal protein uL11 family. As to quaternary structure, part of the ribosomal stalk of the 50S ribosomal subunit. Interacts with L10 and the large rRNA to form the base of the stalk. L10 forms an elongated spine to which L12 dimers bind in a sequential fashion forming a multimeric L10(L12)X complex. Post-translationally, one or more lysine residues are methylated.

Its function is as follows. Forms part of the ribosomal stalk which helps the ribosome interact with GTP-bound translation factors. The sequence is that of Large ribosomal subunit protein uL11 from Clostridium botulinum (strain Kyoto / Type A2).